The chain runs to 154 residues: 6,7-dimethyl-8-ribityllumazine synthase (154 aa).

5-amino-6-(D-ribitylamino)uracil contacts are provided by residues W22, 56-58 (SHE), and 80-82 (AVI). A (2S)-2-hydroxy-3-oxobutyl phosphate-binding site is contributed by 85–86 (DT). H88 serves as the catalytic Proton donor. Position 113 (F113) interacts with 5-amino-6-(D-ribitylamino)uracil. R127 lines the (2S)-2-hydroxy-3-oxobutyl phosphate pocket.

It belongs to the DMRL synthase family.

The catalysed reaction is (2S)-2-hydroxy-3-oxobutyl phosphate + 5-amino-6-(D-ribitylamino)uracil = 6,7-dimethyl-8-(1-D-ribityl)lumazine + phosphate + 2 H2O + H(+). It participates in cofactor biosynthesis; riboflavin biosynthesis; riboflavin from 2-hydroxy-3-oxobutyl phosphate and 5-amino-6-(D-ribitylamino)uracil: step 1/2. Catalyzes the formation of 6,7-dimethyl-8-ribityllumazine by condensation of 5-amino-6-(D-ribitylamino)uracil with 3,4-dihydroxy-2-butanone 4-phosphate. This is the penultimate step in the biosynthesis of riboflavin. The protein is 6,7-dimethyl-8-ribityllumazine synthase of Deinococcus geothermalis (strain DSM 11300 / CIP 105573 / AG-3a).